The chain runs to 439 residues: Capsid assembly protease C (439 aa).

Residue Ser-166 is the Nucleophile of the active site. A disordered region spans residues 303-327 (RLSGGRMTKETQSTTVSATASQADV). Over residues 313 to 327 (TQSTTVSATASQADV) the composition is skewed to low complexity.

Belongs to the peptidase S49 family. As to quaternary structure, capsid assembly protease interacts with capsid scaffolding protein Nu3. Capsid scaffolding protein Nu3 multimerizes and interacts with major capsid protein gpE.

Its subcellular location is the virion. It localises to the host cytoplasm. Its function is as follows. Assembly protease promotes icosahedral procapsid assembly. Autocatalytic cleavage may release the capsid scaffolding protein. The protease domain catalyzes the cleavage of the capsid scaffolding protein after complete procapsid formation. Assembly protease and cleavages products are evicted from the capsid before or during DNA packaging. Scaffolding protein Nu3 promotes icosahedral procapsid assembly. Acts by binding the major capsid protein gpE and multimerizing in interaction with portal dodecamer, thereby placing gpE in a context facilitating icosahedral procapsid formation. Cleaved by capsid assembly protease C after capsid completion. The cleavages products are evicted from the capsid before or during DNA packaging. This Escherichia phage lambda (Bacteriophage lambda) protein is Capsid assembly protease C (C).